Reading from the N-terminus, the 804-residue chain is Probable replication endonuclease from prophage-like region 2 (804 aa).

Residues Tyr-503 and Tyr-507 each act as O-(5'-phospho-DNA)-tyrosine intermediate in the active site.

It belongs to the phage GPA family.

In terms of biological role, possible endonuclease which induces a single-strand cut and initiates DNA replication. The sequence is that of Probable replication endonuclease from prophage-like region 2 from Salmonella typhi.